A 130-amino-acid chain; its full sequence is Encapsulin nanocompartment cargo protein EncC (130 aa).

Fe cation-binding residues include glutamate 31, glutamate 61, and histidine 64. A Di-iron-binding motif motif is present at residues glutamate 61–histidine 64. The disordered stretch occupies residues glutamate 103–arginine 130. A probable targeting peptide region spans residues leucine 123–arginine 130.

The protein belongs to the ferritin-like superfamily.

Its subcellular location is the encapsulin nanocompartment. Cargo protein of a type 1 encapsulin nanocompartment. May help nucleate Fe atoms in the interior of the encapsulin nanocompartment. Present in about 92 copies/encapsulin nanocompartment. The polypeptide is Encapsulin nanocompartment cargo protein EncC (Myxococcus xanthus (strain DK1622)).